The primary structure comprises 476 residues: Aspartyl/glutamyl-tRNA(Asn/Gln) amidotransferase subunit B (476 aa).

It belongs to the GatB/GatE family. GatB subfamily. Heterotrimer of A, B and C subunits.

The catalysed reaction is L-glutamyl-tRNA(Gln) + L-glutamine + ATP + H2O = L-glutaminyl-tRNA(Gln) + L-glutamate + ADP + phosphate + H(+). The enzyme catalyses L-aspartyl-tRNA(Asn) + L-glutamine + ATP + H2O = L-asparaginyl-tRNA(Asn) + L-glutamate + ADP + phosphate + 2 H(+). Its function is as follows. Allows the formation of correctly charged Asn-tRNA(Asn) or Gln-tRNA(Gln) through the transamidation of misacylated Asp-tRNA(Asn) or Glu-tRNA(Gln) in organisms which lack either or both of asparaginyl-tRNA or glutaminyl-tRNA synthetases. The reaction takes place in the presence of glutamine and ATP through an activated phospho-Asp-tRNA(Asn) or phospho-Glu-tRNA(Gln). The chain is Aspartyl/glutamyl-tRNA(Asn/Gln) amidotransferase subunit B from Listeria monocytogenes serotype 4b (strain CLIP80459).